The primary structure comprises 157 residues: Ribosome maturation factor RimP (157 aa).

Belongs to the RimP family.

The protein localises to the cytoplasm. Required for maturation of 30S ribosomal subunits. In Thermus thermophilus (strain ATCC BAA-163 / DSM 7039 / HB27), this protein is Ribosome maturation factor RimP.